A 486-amino-acid polypeptide reads, in one-letter code: uncharacterized protein (486 aa).

Residues 7–28 traverse the membrane as a helical segment; sequence HVISIFETVGAYFINIFYNFLY. N-linked (GlcNAc...) asparagine; by host glycosylation is found at Asn-73, Asn-83, and Asn-195. The stretch at 183-233 forms a coiled coil; it reads ELEETYARLSSYNRSLLYQIEELTSEKKSFLEELSTLRKKYEKRQSEYRRL. The segment at 299–329 is disordered; it reads SQEVTSKSPNNYPVPQSRTIVNKPSDNYPVP. Positions 300–323 are enriched in polar residues; that stretch reads QEVTSKSPNNYPVPQSRTIVNKPS. A glycan (N-linked (GlcNAc...) asparagine; by host) is linked at Asn-461.

It belongs to the asfivirus B475L family.

It is found in the host membrane. This is an uncharacterized protein from Ornithodoros (relapsing fever ticks).